Here is a 490-residue protein sequence, read N- to C-terminus: Cytochrome P450 2C28 (490 aa).

At S127 the chain carries Phosphoserine. 2 positions are modified to N6-acetyllysine: K249 and K375. A heme-binding site is contributed by C435.

It belongs to the cytochrome P450 family. The cofactor is heme. Liver.

The protein resides in the endoplasmic reticulum membrane. It is found in the microsome membrane. The enzyme catalyses an organic molecule + reduced [NADPH--hemoprotein reductase] + O2 = an alcohol + oxidized [NADPH--hemoprotein reductase] + H2O + H(+). Its function is as follows. Catalyzes the N-demethylation of aminopyrine and benzphetamine, but does not catalyze the hydroxylation of tolbutamide, testosterone, and progesterone. In Mesocricetus auratus (Golden hamster), this protein is Cytochrome P450 2C28 (CYP2C28).